The chain runs to 240 residues: Pyridoxine 5'-phosphate synthase (240 aa).

3-amino-2-oxopropyl phosphate is bound at residue N7. 9-10 (DH) contacts 1-deoxy-D-xylulose 5-phosphate. R18 lines the 3-amino-2-oxopropyl phosphate pocket. Catalysis depends on H43, which acts as the Proton acceptor. 1-deoxy-D-xylulose 5-phosphate-binding residues include R45 and H50. E70 functions as the Proton acceptor in the catalytic mechanism. T100 is a 1-deoxy-D-xylulose 5-phosphate binding site. H191 functions as the Proton donor in the catalytic mechanism. 3-amino-2-oxopropyl phosphate-binding positions include G192 and 213-214 (GH).

It belongs to the PNP synthase family. In terms of assembly, homooctamer; tetramer of dimers.

It is found in the cytoplasm. It carries out the reaction 3-amino-2-oxopropyl phosphate + 1-deoxy-D-xylulose 5-phosphate = pyridoxine 5'-phosphate + phosphate + 2 H2O + H(+). It participates in cofactor biosynthesis; pyridoxine 5'-phosphate biosynthesis; pyridoxine 5'-phosphate from D-erythrose 4-phosphate: step 5/5. Functionally, catalyzes the complicated ring closure reaction between the two acyclic compounds 1-deoxy-D-xylulose-5-phosphate (DXP) and 3-amino-2-oxopropyl phosphate (1-amino-acetone-3-phosphate or AAP) to form pyridoxine 5'-phosphate (PNP) and inorganic phosphate. In Microcystis aeruginosa (strain NIES-843 / IAM M-2473), this protein is Pyridoxine 5'-phosphate synthase.